Consider the following 230-residue polypeptide: UPF0173 metal-dependent hydrolase Dshi_2788 (230 aa).

It belongs to the UPF0173 family.

The sequence is that of UPF0173 metal-dependent hydrolase Dshi_2788 from Dinoroseobacter shibae (strain DSM 16493 / NCIMB 14021 / DFL 12).